The following is a 427-amino-acid chain: Glutamate-1-semialdehyde 2,1-aminomutase (427 aa).

The residue at position 267 (lysine 267) is an N6-(pyridoxal phosphate)lysine.

It belongs to the class-III pyridoxal-phosphate-dependent aminotransferase family. HemL subfamily. In terms of assembly, homodimer. Pyridoxal 5'-phosphate serves as cofactor.

It localises to the cytoplasm. It carries out the reaction (S)-4-amino-5-oxopentanoate = 5-aminolevulinate. The protein operates within porphyrin-containing compound metabolism; protoporphyrin-IX biosynthesis; 5-aminolevulinate from L-glutamyl-tRNA(Glu): step 2/2. The polypeptide is Glutamate-1-semialdehyde 2,1-aminomutase (Sulfurihydrogenibium azorense (strain DSM 15241 / OCM 825 / Az-Fu1)).